The chain runs to 209 residues: Uracil phosphoribosyltransferase (209 aa).

5-phospho-alpha-D-ribose 1-diphosphate contacts are provided by residues Arg-79, Arg-104, and Asp-131–Ser-139. Uracil is bound by residues Ile-194 and Gly-199–Ala-201. Asp-200 is a binding site for 5-phospho-alpha-D-ribose 1-diphosphate.

This sequence belongs to the UPRTase family. Requires Mg(2+) as cofactor.

The catalysed reaction is UMP + diphosphate = 5-phospho-alpha-D-ribose 1-diphosphate + uracil. Its pathway is pyrimidine metabolism; UMP biosynthesis via salvage pathway; UMP from uracil: step 1/1. With respect to regulation, allosterically activated by GTP. Functionally, catalyzes the conversion of uracil and 5-phospho-alpha-D-ribose 1-diphosphate (PRPP) to UMP and diphosphate. This is Uracil phosphoribosyltransferase from Rhizobium etli (strain CIAT 652).